A 197-amino-acid chain; its full sequence is Small ribosomal subunit protein uS4 (197 aa).

An S4 RNA-binding domain is found at Arg-94–Asn-158.

It belongs to the universal ribosomal protein uS4 family. As to quaternary structure, part of the 30S ribosomal subunit. Contacts protein S5. The interaction surface between S4 and S5 is involved in control of translational fidelity.

In terms of biological role, one of the primary rRNA binding proteins, it binds directly to 16S rRNA where it nucleates assembly of the body of the 30S subunit. Functionally, with S5 and S12 plays an important role in translational accuracy. The sequence is that of Small ribosomal subunit protein uS4 (rpsD) from Carsonella ruddii (strain PV).